Here is a 1374-residue protein sequence, read N- to C-terminus: Probable multidrug resistance-associated protein lethal(2)03659 (1374 aa).

The disordered stretch occupies residues 1–40; it reads MDKQPVLEPTFDSVSERENTSIEESSLLENNGFDHRNKDE. Helical transmembrane passes span 159–179, 205–225, 282–302, 305–325, 404–424, and 426–446; these read LLRV…VVEL, AGFY…MILT, YTVH…YLMY, IGIS…IQMY, IFLS…EIAF, and ITAY…SAII. Positions 168-449 constitute an ABC transmembrane type-1 1 domain; that stretch reads GFPGLAIFVV…YVPSAIIQTA (282 aa). Residues 466-492 form a disordered region; it reads ELGSSDKSEGPSKDTVPGNPPSNNNEA. One can recognise an ABC transporter 1 domain in the interval 499-722; the sequence is ISIRDLKAKW…GLITGLGSLS (224 aa). An ATP-binding site is contributed by 534–541; sequence GLTGSGKS. The N-linked (GlcNAc...) asparagine glycan is linked to N561. Residues 723–766 form a disordered region; that stretch reads KTDKAKTEEQEPLNLNSPDNKNEVTPIKENSEQTVGGSSSGKEH. The next 5 membrane-spanning stretches (helical) occupy residues 787–807, 845–865, 913–933, 938–958, and 1025–1045; these read GGGL…QVAV, LIII…FNIA, VVLV…IVIA, LLLV…NLYL, and YCMN…FFAF. One can recognise an ABC transmembrane type-1 2 domain in the interval 793 to 1079; that stretch reads FLVMLSSSVL…GVRQTAELEN (287 aa). The region spanning 1119-1352 is the ABC transporter 2 domain; that stretch reads FKELNLRYTP…SDSKVFHNLV (234 aa). 1153 to 1160 provides a ligand contact to ATP; it reads GRTGAGKS. N-linked (GlcNAc...) asparagine glycosylation is found at N1254 and N1353.

The protein belongs to the ABC transporter superfamily. ABCC family. Conjugate transporter (TC 3.A.1.208) subfamily. In terms of tissue distribution, uniform expression in embryos.

The protein localises to the membrane. In terms of biological role, vital for development. The protein is Probable multidrug resistance-associated protein lethal(2)03659 (l(2)03659) of Drosophila melanogaster (Fruit fly).